The chain runs to 779 residues: Pleckstrin homology domain-containing family A member 4 (779 aa).

Residues 54–153 enclose the PH domain; the sequence is PVHIRGWLHK…WLRALGKASR (100 aa). Disordered regions lie at residues 152–355, 495–669, and 694–766; these read SRAE…LPGP, AGLG…SGGH, and SPER…QEEG. S164 bears the Phosphoserine mark. Positions 183-193 are enriched in basic and acidic residues; that stretch reads VNRREEGRTSE. Composition is skewed to low complexity over residues 246–259 and 324–334; these read PRPRSAPVRRPPLS and QSTQVSSGSST. Basic and acidic residues predominate over residues 517–527; the sequence is QREESSERESL. Over residues 528-540 the composition is skewed to low complexity; sequence SESLELSSPQSPE. S562 carries the phosphoserine modification. Residues 567 to 580 show a composition bias toward polar residues; that stretch reads RASSPECRQQSSPL. Low complexity-rich tracts occupy residues 608–627 and 649–659; these read GLSLPRPTSPRLLTLGRTLS and SSGSWSSPRHS. The segment covering 720-740 has biased composition (polar residues); sequence VTSSPTSHKANSATTGFSCQG.

It localises to the cytoplasm. Its subcellular location is the membrane. Functionally, binds specifically to phosphatidylinositol 3-phosphate (PtdIns3P), but not to other phosphoinositides. This is Pleckstrin homology domain-containing family A member 4 (Plekha4) from Rattus norvegicus (Rat).